A 534-amino-acid chain; its full sequence is Apolipoprotein N-acyltransferase (534 aa).

A run of 7 helical transmembrane segments spans residues 8–28 (VILVWGFKRSLLAIGAGAFAV), 31–51 (LPPFGFFAAMFLSFTLLVWLI), 69–89 (AFAVGWLFGFGYFVAGLWWLG), 105–125 (LAILGLPACLAIFYGLAVALA), 127–147 (IFWSDGMGRIAALAAGFGLME), 178–198 (VIGAMGVTALAVFVFSAPALF), and 208–228 (VALAVLLFAAHLGYGAYALYL). The region spanning 246–496 (VQPDIDQAAK…TGFIDATVDS (251 aa)) is the CN hydrolase domain. Glutamate 291 acts as the Proton acceptor in catalysis. The active site involves lysine 355. Catalysis depends on cysteine 408, which acts as the Nucleophile. Residues 511-531 (FWLTEALLILIALISREGFIF) traverse the membrane as a helical segment.

This sequence belongs to the CN hydrolase family. Apolipoprotein N-acyltransferase subfamily.

The protein localises to the cell inner membrane. It catalyses the reaction N-terminal S-1,2-diacyl-sn-glyceryl-L-cysteinyl-[lipoprotein] + a glycerophospholipid = N-acyl-S-1,2-diacyl-sn-glyceryl-L-cysteinyl-[lipoprotein] + a 2-acyl-sn-glycero-3-phospholipid + H(+). It participates in protein modification; lipoprotein biosynthesis (N-acyl transfer). Functionally, catalyzes the phospholipid dependent N-acylation of the N-terminal cysteine of apolipoprotein, the last step in lipoprotein maturation. The chain is Apolipoprotein N-acyltransferase from Rhizobium etli (strain CIAT 652).